Consider the following 690-residue polypeptide: Glycine--tRNA ligase beta subunit (690 aa).

Belongs to the class-II aminoacyl-tRNA synthetase family. As to quaternary structure, tetramer of two alpha and two beta subunits.

The protein resides in the cytoplasm. It carries out the reaction tRNA(Gly) + glycine + ATP = glycyl-tRNA(Gly) + AMP + diphosphate. The chain is Glycine--tRNA ligase beta subunit from Desulfatibacillum aliphaticivorans.